The chain runs to 360 residues: Isocitrate dehydrogenase [NAD] subunit 1, mitochondrial (360 aa).

The N-terminal 11 residues, 1-11 (MLNRTIAKRTL), are a transit peptide targeting the mitochondrion. Arg-109, Arg-140, and Asp-228 together coordinate substrate. Asp-228 provides a ligand contact to Mg(2+).

This sequence belongs to the isocitrate and isopropylmalate dehydrogenases family. As to quaternary structure, octamer of two non-identical subunits IDH1 and IDH2. The cofactor is Mg(2+). Mn(2+) is required as a cofactor.

It is found in the mitochondrion. The catalysed reaction is D-threo-isocitrate + NAD(+) = 2-oxoglutarate + CO2 + NADH. Its activity is regulated as follows. Allosterically regulated by several compounds including AMP, NAD(+), and citrate. Its function is as follows. Performs an essential role in the oxidative function of the citric acid cycle. Also binds RNA; specifically to the 5'-untranslated leaders of mitochondrial mRNAs. The polypeptide is Isocitrate dehydrogenase [NAD] subunit 1, mitochondrial (IDH1) (Saccharomyces cerevisiae (strain ATCC 204508 / S288c) (Baker's yeast)).